Here is a 554-residue protein sequence, read N- to C-terminus: Formate--tetrahydrofolate ligase (554 aa).

64–71 contributes to the ATP binding site; sequence TPAGEGKS.

Belongs to the formate--tetrahydrofolate ligase family.

It carries out the reaction (6S)-5,6,7,8-tetrahydrofolate + formate + ATP = (6R)-10-formyltetrahydrofolate + ADP + phosphate. Its pathway is one-carbon metabolism; tetrahydrofolate interconversion. The sequence is that of Formate--tetrahydrofolate ligase from Leuconostoc citreum (strain KM20).